The following is a 972-amino-acid chain: MADRLIVKGAREHNLRSVDLDLPRDALIVFTGLSGSGKSSLAFDTIFAEGQRRYVESLSAYARQFLGQMDKPDVDFIEGLSPAVSIDQKSTNRNPRSTVGTITEVYDYLRLLYARAGTPHCPTCGERVARQTPQQIVDQVLAMPEGTRFLVLAPVVRTRKGEFADLFDKLNAQGYSRVRVDGVVHPLTDPPKLKKQEKHDIEVVVDRLTVKAAAKRRLTDSVETALNLADGIVVLEFVDHELGAPHREQRFSEKLACPNGHALAVDDLEPRSFSFNSPYGACPECSGLGIRKEVDPELVVPDPDRTLAQGAVAPWSNGHTAEYFTRMMAGLGEALGFDVDTPWRKLPAKARKAILEGADEQVHVRYRNRYGRTRSYYADFEGVLAFLQRKMSQTESEQMKERYEGFMRDVPCPVCAGTRLKPEILAVTLAGESKGEHGAKSIAEVCELSIADCADFLNALTLGPREQAIAGQVLKEIRSRLGFLLDVGLEYLSLSRAAATLSGGEAQRIRLATQIGSGLVGVLYVLDEPSIGLHQRDNRRLIETLTRLRDLGNTLIVVEHDEDTIEHADWIVDIGPGAGEHGGRIVHSGPYDELLRNKDSITGAYLSGRESIEIPAIRRSVDPRRQLTVVGAREHNLRGIDVSFPLGVLTSVTGVSGSGKSTLVNDILAAVLANRLNGARQVPGRHTRVTGLDYLDKLVRVDQSPIGRTPRSNPATYTGVFDKIRTLFAATTEAKVRGYQPGRFSFNVKGGRCEACTGDGTIKIEMNFLPDVYVPCEVCQGARYNRETLEVHYKGKTVSEVLDMSIEEAAEFFEPIAGVHRYLRTLVDVGLGYVRLGQPAPTLSGGEAQRVKLASELQKRSTGRTVYILDEPTTGLHFDDIRKLLNVINGLVDKGNTVIVIEHNLDVIKTSDWIIDLGPEGGAGGGTVVAQGTPEDVAAVPASYTGKFLAEVVGGGASAATSRSNRRRNVSA.

Residue 32–39 (GLSGSGKS) participates in ATP binding. The segment at 257 to 285 (CPNGHALAVDDLEPRSFSFNSPYGACPEC) adopts a C4-type; atypical zinc-finger fold. 2 consecutive ABC transporter domains span residues 315-601 (WSNG…KDSI) and 621-950 (VDPR…KFLA). 654–661 (GVSGSGKS) lines the ATP pocket. The C4-type zinc finger occupies 753-779 (CEACTGDGTIKIEMNFLPDVYVPCEVC).

Belongs to the ABC transporter superfamily. UvrA family. As to quaternary structure, forms a heterotetramer with UvrB during the search for lesions.

The protein resides in the cytoplasm. Its function is as follows. The UvrABC repair system catalyzes the recognition and processing of DNA lesions. UvrA is an ATPase and a DNA-binding protein. A damage recognition complex composed of 2 UvrA and 2 UvrB subunits scans DNA for abnormalities. When the presence of a lesion has been verified by UvrB, the UvrA molecules dissociate. The protein is UvrABC system protein A of Mycobacterium bovis (strain ATCC BAA-935 / AF2122/97).